Reading from the N-terminus, the 483-residue chain is Glutamate--tRNA ligase (483 aa).

The short motif at 9-19 (PSPTGNLHIGT) is the 'HIGH' region element. Positions 250–254 (KLSKR) match the 'KMSKS' region motif. Lys253 contributes to the ATP binding site.

It belongs to the class-I aminoacyl-tRNA synthetase family. Glutamate--tRNA ligase type 1 subfamily. As to quaternary structure, monomer.

The protein resides in the cytoplasm. It carries out the reaction tRNA(Glu) + L-glutamate + ATP = L-glutamyl-tRNA(Glu) + AMP + diphosphate. Its function is as follows. Catalyzes the attachment of glutamate to tRNA(Glu) in a two-step reaction: glutamate is first activated by ATP to form Glu-AMP and then transferred to the acceptor end of tRNA(Glu). This is Glutamate--tRNA ligase from Synechocystis sp. (strain ATCC 27184 / PCC 6803 / Kazusa).